Here is a 417-residue protein sequence, read N- to C-terminus: NADP-specific glutamate dehydrogenase A1 (417 aa).

Lys-105 is an active-site residue.

It belongs to the Glu/Leu/Phe/Val dehydrogenases family. As to quaternary structure, homohexamer.

The enzyme catalyses L-glutamate + NADP(+) + H2O = 2-oxoglutarate + NH4(+) + NADPH + H(+). The polypeptide is NADP-specific glutamate dehydrogenase A1 (gdhA1) (Halobacterium salinarum (Halobacterium halobium)).